The sequence spans 584 residues: MSDTWSHIQAHKKQLDSLRERLQRRRKDPTQLGTEVGSVESGSARSDSPGPAIQSPPQVEVEHPPDPELEKRLLGYLSELSLSLPTDSLTITNQLNTSESPVSHSCIQSLLLKFSAQELIEVRQPSITSSSSSTLVTSVDHTKLWAMIGSAGQSQRTAVKRKADDITHQKRALGSSPSIQAPPSPPRKSSVSLATASISQLTASSGGGGGGADKKGRSNKVQASHLDMEIESLLSQQSTKEQQSKKVSQEILELLNTSSAKEQSIVEKFRSRGRAQVQEFCDYGTKEECVQSGDTPQPCTKLHFRRIINKHTDESLGDCSFLNTCFHMDTCKYVHYEIDSPPEAEGDALGPQAGAAELGLHSTVGDSNVGKLFPSQWICCDIRYLDVSILGKFAVVMADPPWDIHMELPYGTLTDDEMRKLNIPILQDDGFLFLWVTGRAMELGRECLSLWGYDRVDEIIWVKTNQLQRIIRTGRTGHWLNHGKEHCLVGVKGNPQGFNRGLDCDVIVAEVRSTSHKPDEIYGMIERLSPGTRKIELFGRPHNVQPNWITLGNQLDGIHLLDPEVVARFKKRYPDGVISKPKNM.

Disordered stretches follow at residues 1-65 (MSDT…EHPP) and 162-221 (KADD…SNKV). Polar residues predominate over residues 187–204 (RKSSVSLATASISQLTAS). The short motif at 213-220 (DKKGRSNK) is the Nuclear localization signal element. S-adenosyl-L-methionine contacts are provided by residues 381–382 (DI) and D399. The segment at 400–414 (PPWDIHMELPYGTLT) is gate loop 1. 2 interaction with METTL14 regions span residues 454-458 (DRVDE) and 468-484 (QRIIRTGRTGHWLNHGK). Positions 466–483 (QLQRIIRTGRTGHWLNHG) are interphase loop. The segment at 469–482 (RIIRTGRTGHWLNH) is positively charged region required for RNA-binding. The interval 511-519 (VRSTSHKPD) is gate loop 2. S-adenosyl-L-methionine-binding positions include K517, 540-543 (RPHN), and 553-554 (NQ).

Belongs to the MT-A70-like family. Heterodimer; heterodimerizes with mettl14 to form an antiparallel heterodimer that constitutes an active methyltransferase. Component of the WMM complex, a N6-methyltransferase complex composed of a catalytic subcomplex, named MAC, and of an associated subcomplex, named MACOM. The MAC subcomplex is composed of mettl3 and mettl14. Expressed in the hemato-vascular system: enriched in sorted endothelial cells and haemogenic endothelium.

It is found in the nucleus. The protein localises to the nucleus speckle. Its subcellular location is the cytoplasm. The catalysed reaction is an adenosine in mRNA + S-adenosyl-L-methionine = an N(6)-methyladenosine in mRNA + S-adenosyl-L-homocysteine + H(+). In terms of biological role, the METTL3-METTL14 heterodimer forms a N6-methyltransferase complex that methylates adenosine residues at the N(6) position of some RNAs and regulates various processes such as the circadian clock, differentiation of embryonic and hematopoietic stem cells, cortical neurogenesis, response to DNA damage, differentiation of T-cells and primary miRNA processing. In the heterodimer formed with mettl14, mettl3 constitutes the catalytic core. N6-methyladenosine (m6A), which takes place at the 5'-[AG]GAC-3' consensus sites of some mRNAs, plays a role in mRNA stability, processing and translation efficiency. M6A is also involved in hematopoietic stem cells specification: m6A methylation and subsequent destabilization of mRNAs, such as notch1a, leads to decreased Notch signaling, promoting endothelial to hematopoietic transition. M6A also takes place in other RNA molecules, such as primary miRNA (pri-miRNAs). Mediates methylation of pri-miRNAs. This chain is N(6)-adenosine-methyltransferase subunit METTL3, found in Danio rerio (Zebrafish).